Reading from the N-terminus, the 238-residue chain is Metal-independent phosphoserine phosphatase (238 aa).

Histidine 32 acts as the Tele-phosphohistidine intermediate in catalysis. Catalysis depends on glutamate 107, which acts as the Proton donor/acceptor.

Belongs to the phosphoglycerate mutase family.

The catalysed reaction is O-phospho-L-serine + H2O = L-serine + phosphate. It catalyses the reaction O-phospho-D-serine + H2O = D-serine + phosphate. Functionally, phosphoglycerate mutase-like protein lacking PGM activity, but having a low metal-independent phosphoserine phosphatase activity in vitro. May be involved in serine biosynthesis. In Arabidopsis thaliana (Mouse-ear cress), this protein is Metal-independent phosphoserine phosphatase (IPSP).